Reading from the N-terminus, the 580-residue chain is 2-succinyl-5-enolpyruvyl-6-hydroxy-3-cyclohexene-1-carboxylate synthase (580 aa).

It belongs to the TPP enzyme family. MenD subfamily. Homodimer. Mg(2+) serves as cofactor. The cofactor is Mn(2+). Thiamine diphosphate is required as a cofactor.

The catalysed reaction is isochorismate + 2-oxoglutarate + H(+) = 5-enolpyruvoyl-6-hydroxy-2-succinyl-cyclohex-3-ene-1-carboxylate + CO2. It participates in quinol/quinone metabolism; 1,4-dihydroxy-2-naphthoate biosynthesis; 1,4-dihydroxy-2-naphthoate from chorismate: step 2/7. It functions in the pathway quinol/quinone metabolism; menaquinone biosynthesis. Catalyzes the thiamine diphosphate-dependent decarboxylation of 2-oxoglutarate and the subsequent addition of the resulting succinic semialdehyde-thiamine pyrophosphate anion to isochorismate to yield 2-succinyl-5-enolpyruvyl-6-hydroxy-3-cyclohexene-1-carboxylate (SEPHCHC). The protein is 2-succinyl-5-enolpyruvyl-6-hydroxy-3-cyclohexene-1-carboxylate synthase of Listeria welshimeri serovar 6b (strain ATCC 35897 / DSM 20650 / CCUG 15529 / CIP 8149 / NCTC 11857 / SLCC 5334 / V8).